The chain runs to 201 residues: tRNA (guanine-N(7)-)-methyltransferase (201 aa).

Residues Glu33, Glu58, Asp85, and Asp108 each coordinate S-adenosyl-L-methionine. Asp108 is a catalytic residue. Residues Lys112 and Asp144 each contribute to the substrate site.

This sequence belongs to the class I-like SAM-binding methyltransferase superfamily. TrmB family.

The enzyme catalyses guanosine(46) in tRNA + S-adenosyl-L-methionine = N(7)-methylguanosine(46) in tRNA + S-adenosyl-L-homocysteine. It participates in tRNA modification; N(7)-methylguanine-tRNA biosynthesis. Functionally, catalyzes the formation of N(7)-methylguanine at position 46 (m7G46) in tRNA. This chain is tRNA (guanine-N(7)-)-methyltransferase, found in Anaeromyxobacter dehalogenans (strain 2CP-C).